The chain runs to 968 residues: Alanine--tRNA ligase, cytoplasmic (968 aa).

Methionine 1 is modified (N-acetylmethionine). Phosphoserine occurs at positions 3 and 8. Lysine 19 bears the N6-acetyllysine mark. Residues arginine 77, histidine 95, tryptophan 176, and 214-216 each bind ATP; that span reads IWN. L-alanine-binding residues include asparagine 216 and aspartate 239. Glycine 243 provides a ligand contact to ATP. Serine 399 and serine 555 each carry phosphoserine. Positions 605, 609, 723, and 727 each coordinate Zn(2+). Residues 750–763 carry the Nuclear localization signal motif; sequence RRIVAVTGAEAQKA. At lysine 876 the chain carries N6-acetyllysine. Residue lysine 943 is modified to N6,N6,N6-trimethyllysine; alternate. Lysine 943 is subject to N6,N6-dimethyllysine; alternate. At lysine 943 the chain carries N6-methyllysine; alternate.

Belongs to the class-II aminoacyl-tRNA synthetase family. In terms of assembly, monomer. Interacts with ANKRD16; the interaction is direct. Requires Zn(2+) as cofactor. ISGylated. In terms of processing, methylation at 'Lys-943' by METTL21C.

It is found in the cytoplasm. The protein resides in the nucleus. It carries out the reaction tRNA(Ala) + L-alanine + ATP = L-alanyl-tRNA(Ala) + AMP + diphosphate. It catalyses the reaction (S)-lactate + ATP + H(+) = (S)-lactoyl-AMP + diphosphate. The catalysed reaction is (S)-lactoyl-AMP + L-lysyl-[protein] = N(6)-[(S)-lactoyl]-L-lysyl-[protein] + AMP + 2 H(+). Its activity is regulated as follows. The protein lactyltransferase activity is inhibited by beta-alanine. Catalyzes the attachment of alanine to tRNA(Ala) in a two-step reaction: alanine is first activated by ATP to form Ala-AMP and then transferred to the acceptor end of tRNA(Ala). Also edits incorrectly charged tRNA(Ala) via its editing domain. In presence of high levels of lactate, also acts as a protein lactyltransferase that mediates lactylation of lysine residues in target proteins, such as TEAD1, TP53/p53 and YAP1. Protein lactylation takes place in a two-step reaction: lactate is first activated by ATP to form lactate-AMP and then transferred to lysine residues of target proteins. Acts as an inhibitor of TP53/p53 activity by catalyzing lactylation of TP53/p53. Acts as a positive regulator of the Hippo pathway by mediating lactylation of TEAD1 and YAP1. This chain is Alanine--tRNA ligase, cytoplasmic (AARS1), found in Pongo abelii (Sumatran orangutan).